Reading from the N-terminus, the 243-residue chain is 3-deoxy-manno-octulosonate cytidylyltransferase (243 aa).

The protein belongs to the KdsB family.

The protein resides in the cytoplasm. The catalysed reaction is 3-deoxy-alpha-D-manno-oct-2-ulosonate + CTP = CMP-3-deoxy-beta-D-manno-octulosonate + diphosphate. It functions in the pathway nucleotide-sugar biosynthesis; CMP-3-deoxy-D-manno-octulosonate biosynthesis; CMP-3-deoxy-D-manno-octulosonate from 3-deoxy-D-manno-octulosonate and CTP: step 1/1. The protein operates within bacterial outer membrane biogenesis; lipopolysaccharide biosynthesis. In terms of biological role, activates KDO (a required 8-carbon sugar) for incorporation into bacterial lipopolysaccharide in Gram-negative bacteria. This chain is 3-deoxy-manno-octulosonate cytidylyltransferase, found in Helicobacter pylori (strain J99 / ATCC 700824) (Campylobacter pylori J99).